The primary structure comprises 357 residues: MSEGQKFQLGTIGALSLSVVSSVSIVICNKALISTLGFTFATTLTSWHLLVTFCSLHVALWMKMFEHKPFDPRAVMGFGILNGISIGLLNLSLGFNSVGFYQMTKLAIIPCTVLLETLFFRKKFSRKIQFSLTILLLGVGIATVTDLQLNMLGSVLSLLAVVTTCVAQIMTNTIQKKFKVSSTQLLYQSCPYQAITLFVTGPFLDGLLTNQNVFAFKYTSQVVFFIVLSCLISVSVNFSTFLVIGKTSPVTYQVLGHLKTCLVLAFGYVLLRDPFDWRNILGILVAVIGMVVYSYYCSIETQQKASETSTQLPQMKESEKDPLIAAENGSGVLSDGGGGVQQKTVAPVWNSNKDFQA.

The next 10 helical transmembrane spans lie at 7-27, 31-51, 75-95, 100-120, 132-152, 154-174, 194-214, 224-244, 250-270, and 280-300; these read FQLG…SIVI, ALIS…HLLV, VMGF…SLGF, FYQM…TLFF, LTIL…LNML, SVLS…TNTI, AITL…QNVF, FFIV…FLVI, VTYQ…GYVL, and ILGI…CSIE. At Ser-334 the chain carries Phosphoserine.

The protein belongs to the TPT transporter family. TPT (TC 2.A.7.9) subfamily. As to expression, ubiquitous.

The protein localises to the golgi apparatus membrane. Functionally, nucleotide-sugar transporter that transports UDP-xylose and UMP in a strict counter-exchange mode. The protein is UDP-xylose transporter 3 of Arabidopsis thaliana (Mouse-ear cress).